Reading from the N-terminus, the 154-residue chain is Sperm microtubule associated protein 1 (154 aa).

In Homo sapiens (Human), this protein is Sperm microtubule associated protein 1.